A 216-amino-acid chain; its full sequence is Uracil phosphoribosyltransferase (216 aa).

5-phospho-alpha-D-ribose 1-diphosphate-binding positions include R85, R110, and 135 to 143 (DPMVATGYS). Residues I200 and 205 to 207 (GDA) each bind uracil. D206 is a 5-phospho-alpha-D-ribose 1-diphosphate binding site.

Belongs to the UPRTase family. The cofactor is Mg(2+).

It catalyses the reaction UMP + diphosphate = 5-phospho-alpha-D-ribose 1-diphosphate + uracil. Its pathway is pyrimidine metabolism; UMP biosynthesis via salvage pathway; UMP from uracil: step 1/1. Its activity is regulated as follows. Allosterically activated by GTP. Functionally, catalyzes the conversion of uracil and 5-phospho-alpha-D-ribose 1-diphosphate (PRPP) to UMP and diphosphate. The protein is Uracil phosphoribosyltransferase of Burkholderia mallei (strain NCTC 10247).